We begin with the raw amino-acid sequence, 322 residues long: Corticotropin-releasing factor-binding protein (322 aa).

An N-terminal signal peptide occupies residues 1 to 24 (MSPNFKLQCHFILILLTALRGESR). 5 disulfides stabilise this stretch: Cys60–Cys81, Cys104–Cys141, Cys183–Cys205, Cys237–Cys264, and Cys277–Cys318. Residue Asn204 is glycosylated (N-linked (GlcNAc...) asparagine).

Belongs to the CRF-binding protein family.

It localises to the secreted. Binds CRF and inactivates it. May prevent inappropriate pituitary-adrenal stimulation in pregnancy. The polypeptide is Corticotropin-releasing factor-binding protein (Crhbp) (Mus musculus (Mouse)).